We begin with the raw amino-acid sequence, 692 residues long: Elongation factor G (692 aa).

Positions 8 to 282 (EKTRNIGIMA…AVVEYMPAPT (275 aa)) constitute a tr-type G domain. Residues 17-24 (AHIDAGKT), 81-85 (DTPGH), and 135-138 (NKMD) each bind GTP. The tract at residues 285–304 (PNIKGVHPETGEADERHSSD) is disordered. Residues 290–304 (VHPETGEADERHSSD) are compositionally biased toward basic and acidic residues.

Belongs to the TRAFAC class translation factor GTPase superfamily. Classic translation factor GTPase family. EF-G/EF-2 subfamily.

Its subcellular location is the cytoplasm. Functionally, catalyzes the GTP-dependent ribosomal translocation step during translation elongation. During this step, the ribosome changes from the pre-translocational (PRE) to the post-translocational (POST) state as the newly formed A-site-bound peptidyl-tRNA and P-site-bound deacylated tRNA move to the P and E sites, respectively. Catalyzes the coordinated movement of the two tRNA molecules, the mRNA and conformational changes in the ribosome. The chain is Elongation factor G from Desulfitobacterium hafniense (strain Y51).